A 263-amino-acid polypeptide reads, in one-letter code: uncharacterized protein (263 aa).

The disordered stretch occupies residues 198–224 (KRSSDSFVSLKPGEDEHSPLEISTCGN).

This is an uncharacterized protein from Saccharomyces cerevisiae (strain ATCC 204508 / S288c) (Baker's yeast).